The sequence spans 298 residues: GTP cyclohydrolase FolE2 (298 aa).

This sequence belongs to the GTP cyclohydrolase IV family.

The catalysed reaction is GTP + H2O = 7,8-dihydroneopterin 3'-triphosphate + formate + H(+). Its pathway is cofactor biosynthesis; 7,8-dihydroneopterin triphosphate biosynthesis; 7,8-dihydroneopterin triphosphate from GTP: step 1/1. Its function is as follows. Converts GTP to 7,8-dihydroneopterin triphosphate. The sequence is that of GTP cyclohydrolase FolE2 from Azotobacter vinelandii (strain DJ / ATCC BAA-1303).